The chain runs to 307 residues: Upstream stimulatory factor 1 (307 aa).

Disordered stretches follow at residues 104–131 (DDNGETDASGPETHYTYFPTDSSTSVGG) and 168–207 (QGGSQRSIAPRTHPYSPKSDGPRTTRDDKRRAQHNEVERR). Residues 122-131 (PTDSSTSVGG) are compositionally biased toward low complexity. Over residues 187 to 207 (DGPRTTRDDKRRAQHNEVERR) the composition is skewed to basic and acidic residues. The region spanning 196 to 251 (KRRAQHNEVERRRRDKINNWIVQLSKIIPDCSMESTKTGQSKGGILSKACDYIQEL) is the bHLH domain. The interval 268-289 (LQMDNEVLRQQVEDLKNNNLTL) is leucine-zipper.

As to quaternary structure, efficient DNA binding requires dimerization with another bHLH protein. Binds DNA as a homodimer or a heterodimer. In terms of tissue distribution, oocyte and somatic tissue. Oocytic and somatic forms of this protein exist, probably as a result of post-translational modifications or minor splicing differences.

The protein resides in the nucleus. May act as a regulator of transcription factor IIIA (TFIIIA) gene expression. The polypeptide is Upstream stimulatory factor 1 (usf1) (Xenopus borealis (Kenyan clawed frog)).